A 191-amino-acid polypeptide reads, in one-letter code: Acireductone dioxygenase 2 (191 aa).

Fe(2+) is bound by residues histidine 102, histidine 104, glutamate 108, and histidine 146. The Ni(2+) site is built by histidine 102, histidine 104, glutamate 108, and histidine 146.

Belongs to the acireductone dioxygenase (ARD) family. As to quaternary structure, monomer. Fe(2+) serves as cofactor. Requires Ni(2+) as cofactor.

The catalysed reaction is 1,2-dihydroxy-5-(methylsulfanyl)pent-1-en-3-one + O2 = 3-(methylsulfanyl)propanoate + CO + formate + 2 H(+). It catalyses the reaction 1,2-dihydroxy-5-(methylsulfanyl)pent-1-en-3-one + O2 = 4-methylsulfanyl-2-oxobutanoate + formate + 2 H(+). Its pathway is amino-acid biosynthesis; L-methionine biosynthesis via salvage pathway; L-methionine from S-methyl-5-thio-alpha-D-ribose 1-phosphate: step 5/6. Its function is as follows. Catalyzes 2 different reactions between oxygen and the acireductone 1,2-dihydroxy-3-keto-5-methylthiopentene (DHK-MTPene) depending upon the metal bound in the active site. Fe-containing acireductone dioxygenase (Fe-ARD) produces formate and 2-keto-4-methylthiobutyrate (KMTB), the alpha-ketoacid precursor of methionine in the methionine recycle pathway. Ni-containing acireductone dioxygenase (Ni-ARD) produces methylthiopropionate, carbon monoxide and formate, and does not lie on the methionine recycle pathway. The protein is Acireductone dioxygenase 2 of Nocardia farcinica (strain IFM 10152).